Consider the following 288-residue polypeptide: tRNA pseudouridine synthase A (288 aa).

Residue Asp59 is the Nucleophile of the active site. Tyr134 lines the substrate pocket.

It belongs to the tRNA pseudouridine synthase TruA family. Homodimer.

The catalysed reaction is uridine(38/39/40) in tRNA = pseudouridine(38/39/40) in tRNA. Formation of pseudouridine at positions 38, 39 and 40 in the anticodon stem and loop of transfer RNAs. The protein is tRNA pseudouridine synthase A of Leifsonia xyli subsp. xyli (strain CTCB07).